The primary structure comprises 158 residues: 6,7-dimethyl-8-ribityllumazine synthase (158 aa).

5-amino-6-(D-ribitylamino)uracil-binding positions include Phe23, 61–63 (SFE), and 85–87 (AVI). 90 to 91 (ET) contributes to the (2S)-2-hydroxy-3-oxobutyl phosphate binding site. The active-site Proton donor is the His93. 5-amino-6-(D-ribitylamino)uracil is bound at residue Phe118. Arg132 contributes to the (2S)-2-hydroxy-3-oxobutyl phosphate binding site.

It belongs to the DMRL synthase family.

It catalyses the reaction (2S)-2-hydroxy-3-oxobutyl phosphate + 5-amino-6-(D-ribitylamino)uracil = 6,7-dimethyl-8-(1-D-ribityl)lumazine + phosphate + 2 H2O + H(+). The protein operates within cofactor biosynthesis; riboflavin biosynthesis; riboflavin from 2-hydroxy-3-oxobutyl phosphate and 5-amino-6-(D-ribitylamino)uracil: step 1/2. Its function is as follows. Catalyzes the formation of 6,7-dimethyl-8-ribityllumazine by condensation of 5-amino-6-(D-ribitylamino)uracil with 3,4-dihydroxy-2-butanone 4-phosphate. This is the penultimate step in the biosynthesis of riboflavin. This chain is 6,7-dimethyl-8-ribityllumazine synthase, found in Prochlorococcus marinus (strain MIT 9515).